Here is a 160-residue protein sequence, read N- to C-terminus: Glyoxalase domain-containing protein 5 (160 aa).

The region spanning 33–153 (RLDHLVLTVR…DHNLIEVSNY (121 aa)) is the VOC domain.

Belongs to the glyoxalase I family.

The protein is Glyoxalase domain-containing protein 5 (glod5) of Xenopus laevis (African clawed frog).